The following is a 307-amino-acid chain: Aspartate carbamoyltransferase catalytic subunit (307 aa).

2 residues coordinate carbamoyl phosphate: Arg51 and Thr52. Lys80 serves as a coordination point for L-aspartate. Carbamoyl phosphate-binding residues include Arg101, His129, and Gln132. L-aspartate-binding residues include Arg162 and Arg225. Leu264 and Pro265 together coordinate carbamoyl phosphate.

Belongs to the aspartate/ornithine carbamoyltransferase superfamily. ATCase family. Heterododecamer (2C3:3R2) of six catalytic PyrB chains organized as two trimers (C3), and six regulatory PyrI chains organized as three dimers (R2).

The enzyme catalyses carbamoyl phosphate + L-aspartate = N-carbamoyl-L-aspartate + phosphate + H(+). Its pathway is pyrimidine metabolism; UMP biosynthesis via de novo pathway; (S)-dihydroorotate from bicarbonate: step 2/3. Its function is as follows. Catalyzes the condensation of carbamoyl phosphate and aspartate to form carbamoyl aspartate and inorganic phosphate, the committed step in the de novo pyrimidine nucleotide biosynthesis pathway. The polypeptide is Aspartate carbamoyltransferase catalytic subunit (Lachnoclostridium phytofermentans (strain ATCC 700394 / DSM 18823 / ISDg) (Clostridium phytofermentans)).